The primary structure comprises 802 residues: DSC E3 ubiquitin ligase complex subunit A (802 aa).

A signal peptide spans 1-22; it reads MDNRGSFFFLLIVFYLLLSSQS. At 23 to 381 the chain is on the lumenal side; that stretch reads RPPLLDQDRE…TGPKIEEYDK (359 aa). 6 N-linked (GlcNAc...) asparagine glycosylation sites follow: Asn-48, Asn-71, Asn-115, Asn-126, Asn-148, and Asn-166. A helical membrane pass occupies residues 382 to 402; sequence YSARLVFIICGVFAAQITLLL. Residues 403–429 lie on the Cytoplasmic side of the membrane; it reads RQIKEASTPSTRSRISFYTIALMAFGD. Residues 430–450 traverse the membrane as a helical segment; sequence AFVLIFILLELYPAVSFLVMA. Residues 451–453 lie on the Lumenal side of the membrane; that stretch reads TAA. Residues 454-474 form a helical membrane-spanning segment; that stretch reads FLTFLSVSYIGMKFMMEIWAV. Residues 475-550 lie on the Cytoplasmic side of the membrane; it reads QAPERREQER…QETRNDVGAM (76 aa). Residues 478–541 are disordered; it reads ERREQERRSN…TNRGTTSAAQ (64 aa). The span at 532-541 shows a compositional bias: polar residues; the sequence is TNRGTTSAAQ. Residues 551–571 form a helical membrane-spanning segment; sequence YARFYFVLFVMLIISIWSFLW. Residues 572–574 lie on the Lumenal side of the membrane; it reads PNR. Residues 575 to 595 form a helical membrane-spanning segment; it reads LGALYARALAFVYLSFWTPQI. The Cytoplasmic segment spans residues 596–608; it reads GRNIIRNCRKALR. Residues 609–629 traverse the membrane as a helical segment; that stretch reads WDFVIGQSILRLFPFVYFLTV. The Lumenal segment spans residues 630-642; sequence RGNVLFIHPDTTT. The chain crosses the membrane as a helical span at residues 643-663; that stretch reads AFALAGWVWIQVWVLASQDIL. Topologically, residues 664 to 802 are cytoplasmic; that stretch reads GPRFFVPRGW…PICRESIPPV (139 aa). An RING-type; atypical zinc finger spans residues 732-796; that stretch reads CAICMQEIEV…RLRLQCPICR (65 aa).

In terms of assembly, component of the DSC E3 ubiquitin ligase complex composed of dscA, dscB, dscC and dscD.

The protein localises to the endoplasmic reticulum membrane. It carries out the reaction S-ubiquitinyl-[E2 ubiquitin-conjugating enzyme]-L-cysteine + [acceptor protein]-L-lysine = [E2 ubiquitin-conjugating enzyme]-L-cysteine + N(6)-ubiquitinyl-[acceptor protein]-L-lysine.. Its pathway is protein modification; protein ubiquitination. Functionally, catalytic component of the DSC E3 ubiquitin ligase complex which is required for the srbA transcriptional activator proteolytic cleavage to release the soluble transcription factor from the membrane in low oxygen or sterol conditions. Required for growth during hypoxia and triazole drug susceptibility, as well as for virulence in a murine model of invasive pulmonary aspergillosis (IPA). The sequence is that of DSC E3 ubiquitin ligase complex subunit A from Aspergillus fumigatus (strain CBS 144.89 / FGSC A1163 / CEA10) (Neosartorya fumigata).